A 152-amino-acid chain; its full sequence is Transcriptional regulator MraZ (152 aa).

SpoVT-AbrB domains follow at residues 5–52 (ATLV…PLPE) and 81–124 (ASEC…DEQT).

Belongs to the MraZ family. As to quaternary structure, forms oligomers.

It localises to the cytoplasm. The protein localises to the nucleoid. Functionally, negatively regulates its own expression and that of the subsequent genes in the proximal part of the division and cell wall (dcw) gene cluster. Acts by binding directly to DNA. May also regulate the expression of genes outside the dcw cluster. The protein is Transcriptional regulator MraZ of Erwinia tasmaniensis (strain DSM 17950 / CFBP 7177 / CIP 109463 / NCPPB 4357 / Et1/99).